Reading from the N-terminus, the 357-residue chain is uncharacterized protein (357 aa).

The disordered stretch occupies residues 120–145 (SSSTVNHDQPAEQPSDKSTDDSTGYP).

This is an uncharacterized protein from Caenorhabditis elegans.